A 162-amino-acid chain; its full sequence is Ribosomal RNA large subunit methyltransferase H (162 aa).

S-adenosyl-L-methionine contacts are provided by residues Leu-78, Gly-109, and 128 to 133; that span reads LSALTL.

This sequence belongs to the RNA methyltransferase RlmH family. In terms of assembly, homodimer.

The protein resides in the cytoplasm. The enzyme catalyses pseudouridine(1915) in 23S rRNA + S-adenosyl-L-methionine = N(3)-methylpseudouridine(1915) in 23S rRNA + S-adenosyl-L-homocysteine + H(+). Its function is as follows. Specifically methylates the pseudouridine at position 1915 (m3Psi1915) in 23S rRNA. The polypeptide is Ribosomal RNA large subunit methyltransferase H (Psychrobacter cryohalolentis (strain ATCC BAA-1226 / DSM 17306 / VKM B-2378 / K5)).